The sequence spans 188 residues: Mitochondrial import receptor subunit TOM20 homolog (188 aa).

Residues Met-1 to Asn-12 are Mitochondrial intermembrane-facing. The chain crosses the membrane as a helical span at residues Val-13–Phe-31. Topologically, residues Asp-32–Glu-188 are cytoplasmic. Disordered regions lie at residues Lys-42–Asp-73 and Asp-156–Glu-188. The segment covering Met-58–Gly-67 has biased composition (low complexity).

Belongs to the Tom20 family. Forms part of the preprotein translocase complex of the outer mitochondrial membrane (TOM complex).

It localises to the mitochondrion outer membrane. In terms of biological role, central component of the receptor complex responsible for the recognition and translocation of cytosolically synthesized mitochondrial preproteins. Together with tomm-22 functions as the transit peptide receptor at the surface of the mitochondrion outer membrane and facilitates the movement of preproteins into the translocation pore. The sequence is that of Mitochondrial import receptor subunit TOM20 homolog from Caenorhabditis elegans.